The following is a 72-amino-acid chain: Translation initiation factor IF-1 (72 aa).

The S1-like domain maps to Met-1–Arg-72.

This sequence belongs to the IF-1 family. As to quaternary structure, component of the 30S ribosomal translation pre-initiation complex which assembles on the 30S ribosome in the order IF-2 and IF-3, IF-1 and N-formylmethionyl-tRNA(fMet); mRNA recruitment can occur at any time during PIC assembly.

It is found in the cytoplasm. Its function is as follows. One of the essential components for the initiation of protein synthesis. Stabilizes the binding of IF-2 and IF-3 on the 30S subunit to which N-formylmethionyl-tRNA(fMet) subsequently binds. Helps modulate mRNA selection, yielding the 30S pre-initiation complex (PIC). Upon addition of the 50S ribosomal subunit IF-1, IF-2 and IF-3 are released leaving the mature 70S translation initiation complex. In Shewanella baltica (strain OS155 / ATCC BAA-1091), this protein is Translation initiation factor IF-1.